The chain runs to 905 residues: Clumping factor B (905 aa).

The signal sequence occupies residues 1 to 44 (MKKRIDYLSNKQNKYSIRRFTVGTTSVIVGATILFGIGNHQAQA). The YSIRK-G/S signaling motif motif lies at 15–26 (YSIRRFTVGTTS). 2 stretches are compositionally biased toward polar residues: residues 44–61 (ASEQ…NASA) and 68–101 (MIET…KPMS). The tract at residues 44-191 (ASEQSNDTTQ…AQGTSKPSVR (148 aa)) is disordered. The ligand binding A region stretch occupies residues 45 to 542 (SEQSNDTTQS…GSADGDSAVN (498 aa)). The segment covering 102 to 119 (TQTSNTTTTEPASTNETP) has biased composition (low complexity). Residues 134–189 (QDQTVPQEANSQVDNKTTNDANSIATNSELKNPQTLDLPQSSPQTISNAQGTSKPS) are compositionally biased toward polar residues. Positions 272–276 (DYSNS) match the MIDAS-like motif motif. A disordered region spans residues 530–877 (YGGGSADGDS…ETGDKSENTN (348 aa)). Residues 545–555 (DPTPGPPVDPE) show a composition bias toward pro residues. A compositionally biased stretch (acidic residues) spans 556–829 (PSPDPEPEPS…SDSDSDSDSD (274 aa)). Residues 833–844 (RVTPPNNEQKAP) are compositionally biased toward polar residues. Over residues 861-874 (HKTDALPETGDKSE) the composition is skewed to basic and acidic residues. Residues 866 to 870 (LPETG) carry the LPXTG sorting signal motif. The residue at position 869 (threonine 869) is a Pentaglycyl murein peptidoglycan amidated threonine. A propeptide spans 870–905 (GDKSENTNATLFGAMMALLGSLLLFRKRKQDHKEKA) (removed by sortase).

This sequence belongs to the serine-aspartate repeat-containing protein (SDr) family. Proteolytically cleaved by aureolysin (aur). This cleavage leads to the inactivation of ClfB.

The protein resides in the secreted. It is found in the cell wall. Cell surface-associated protein implicated in virulence by promoting bacterial attachment to both alpha- and beta-chains of human fibrinogen and inducing the formation of bacterial clumps. The polypeptide is Clumping factor B (clfB) (Staphylococcus aureus (strain MSSA476)).